Consider the following 139-residue polypeptide: D-ribose pyranase (139 aa).

The active-site Proton donor is H20. Substrate-binding positions include D28, H106, and Y128–N130.

It belongs to the RbsD / FucU family. RbsD subfamily. As to quaternary structure, homodecamer.

It localises to the cytoplasm. It carries out the reaction beta-D-ribopyranose = beta-D-ribofuranose. Its pathway is carbohydrate metabolism; D-ribose degradation; D-ribose 5-phosphate from beta-D-ribopyranose: step 1/2. In terms of biological role, catalyzes the interconversion of beta-pyran and beta-furan forms of D-ribose. The chain is D-ribose pyranase from Actinobacillus succinogenes (strain ATCC 55618 / DSM 22257 / CCUG 43843 / 130Z).